Here is a 153-residue protein sequence, read N- to C-terminus: Ribosome maturation factor RimP (153 aa).

Belongs to the RimP family.

The protein localises to the cytoplasm. Required for maturation of 30S ribosomal subunits. The protein is Ribosome maturation factor RimP of Glaesserella parasuis serovar 5 (strain SH0165) (Haemophilus parasuis).